The primary structure comprises 131 residues: Methylglyoxal synthase (131 aa).

The MGS-like domain occupies 1–131 (MKIALIAHDK…GDLDYRKFRK (131 aa)). Residues H8, K12, 34-37 (TGTT), and 54-55 (SG) each bind substrate. Residue D60 is the Proton donor/acceptor of the active site. H87 provides a ligand contact to substrate.

The protein belongs to the methylglyoxal synthase family.

It catalyses the reaction dihydroxyacetone phosphate = methylglyoxal + phosphate. Functionally, catalyzes the formation of methylglyoxal from dihydroxyacetone phosphate. The protein is Methylglyoxal synthase of Bacillus cytotoxicus (strain DSM 22905 / CIP 110041 / 391-98 / NVH 391-98).